The chain runs to 647 residues: Threonine--tRNA ligase (647 aa).

The 61-residue stretch at 1–61 (MIKITFPDGA…EEDGSIEIVT (61 aa)) folds into the TGS domain. The segment at 240-538 (DHRKLGKELD…LIETYKGAFP (299 aa)) is catalytic. Zn(2+) contacts are provided by cysteine 334, histidine 385, and histidine 515.

Belongs to the class-II aminoacyl-tRNA synthetase family. In terms of assembly, homodimer. The cofactor is Zn(2+).

Its subcellular location is the cytoplasm. The enzyme catalyses tRNA(Thr) + L-threonine + ATP = L-threonyl-tRNA(Thr) + AMP + diphosphate + H(+). In terms of biological role, catalyzes the attachment of threonine to tRNA(Thr) in a two-step reaction: L-threonine is first activated by ATP to form Thr-AMP and then transferred to the acceptor end of tRNA(Thr). Also edits incorrectly charged L-seryl-tRNA(Thr). The chain is Threonine--tRNA ligase from Streptococcus pyogenes serotype M28 (strain MGAS6180).